The chain runs to 332 residues: UDP-N-acetylenolpyruvoylglucosamine reductase (332 aa).

Positions 15-184 (IDVSAACFLE…TYVSFRLSKR (170 aa)) constitute an FAD-binding PCMH-type domain. Arg160 is a catalytic residue. Ser232 functions as the Proton donor in the catalytic mechanism. Residue Glu328 is part of the active site.

Belongs to the MurB family. It depends on FAD as a cofactor.

The protein localises to the cytoplasm. The enzyme catalyses UDP-N-acetyl-alpha-D-muramate + NADP(+) = UDP-N-acetyl-3-O-(1-carboxyvinyl)-alpha-D-glucosamine + NADPH + H(+). Its pathway is cell wall biogenesis; peptidoglycan biosynthesis. Functionally, cell wall formation. The chain is UDP-N-acetylenolpyruvoylglucosamine reductase from Bacteroides fragilis (strain YCH46).